The sequence spans 135 residues: Large ribosomal subunit protein eL32 (135 aa).

Belongs to the eukaryotic ribosomal protein eL32 family. Component of the large ribosomal subunit.

The protein localises to the cytoplasm. In terms of biological role, component of the large ribosomal subunit. The ribosome is a large ribonucleoprotein complex responsible for the synthesis of proteins in the cell. The protein is Large ribosomal subunit protein eL32 (rpl32) of Ictalurus punctatus (Channel catfish).